A 213-amino-acid polypeptide reads, in one-letter code: Non-structural protein NP-1 (213 aa).

A disordered region spans residues 1-80 (MERSRSPRET…ATRKETATKK (80 aa)). 2 stretches are compositionally biased toward basic and acidic residues: residues 15–33 (SRDK…ERTR) and 43–58 (AHGE…REKN).

Belongs to the Bocaparvovirus Non-structural protein NP-1 family.

Its subcellular location is the host nucleus. Functionally, required for the expression of the capsid proteins. Performs the splicing and internal polyadenylation of the viral capsid-encoding mRNA precursor, which allows its maturation and expression. Transactivates the viral promoter. This chain is Non-structural protein NP-1 (NP1), found in Bos taurus (Bovine).